We begin with the raw amino-acid sequence, 293 residues long: Calcium uniporter protein 2, mitochondrial (293 aa).

Residues 1 to 33 constitute a mitochondrion transit peptide; sequence MWSVMGLVRRTAMSSTVNKASPVRSLLGGFRCL. A helical transmembrane segment spans residues 168–188; sequence ILWGGLGYSVVQIGIFVRLTF. The Selectivity filter motif lies at 193–201; sequence WDVMEPITF. Glutamate 197 lines the Ca(2+) pocket. The helical transmembrane segment at 198 to 218 threads the bilayer; it reads PITFFTTATGIIVGYAYFLMT.

It belongs to the MCU (TC 1.A.77) family.

Its subcellular location is the mitochondrion inner membrane. It carries out the reaction Ca(2+)(in) = Ca(2+)(out). Functionally, mitochondrial inner membrane calcium uniporter that mediates calcium uptake into mitochondria. Constitutes a pore-forming and calcium-conducting subunit. Mitochondrial calcium homeostasis plays key roles in cellular physiology and regulates cell bioenergetics, cytoplasmic calcium signals and activation of cell death pathways. The protein is Calcium uniporter protein 2, mitochondrial of Arabidopsis thaliana (Mouse-ear cress).